Consider the following 346-residue polypeptide: Small ribosomal subunit biogenesis GTPase RsgA (346 aa).

The interval 1 to 25 (MAKRKLTQNQTRRIQSNNAKTLHRH) is disordered. The span at 7–20 (TQNQTRRIQSNNAK) shows a compositional bias: polar residues. Positions 103 to 271 (ENEISRPDYY…LIDSPGIREF (169 aa)) constitute a CP-type G domain. Residues 159–162 (NKVD) and 213–221 (GQSGVGKSS) contribute to the GTP site. The Zn(2+) site is built by cysteine 295, cysteine 300, histidine 302, and cysteine 308.

Belongs to the TRAFAC class YlqF/YawG GTPase family. RsgA subfamily. In terms of assembly, monomer. Associates with 30S ribosomal subunit, binds 16S rRNA. Zn(2+) is required as a cofactor.

The protein resides in the cytoplasm. Its function is as follows. One of several proteins that assist in the late maturation steps of the functional core of the 30S ribosomal subunit. Helps release RbfA from mature subunits. May play a role in the assembly of ribosomal proteins into the subunit. Circularly permuted GTPase that catalyzes slow GTP hydrolysis, GTPase activity is stimulated by the 30S ribosomal subunit. The protein is Small ribosomal subunit biogenesis GTPase RsgA of Haemophilus influenzae (strain ATCC 51907 / DSM 11121 / KW20 / Rd).